Consider the following 732-residue polypeptide: E3 ubiquitin-protein ligase RNF19B (732 aa).

Positions 1-109 (MGSEKDSESP…PEEDEAAEGG (109 aa)) are disordered. Residues 1–315 (MGSEKDSESP…VCGCEFCWLC (315 aa)) form a required for ubiquitin ligase activity and for protection against staurosporin-induced cell death region. Over residues 54 to 71 (AEPPPPAAPPPPPPPAPA) the composition is skewed to pro residues. The segment covering 72–99 (PVEAQAPPVEALPSEPAAEAEAEAVAAG) has biased composition (low complexity). Over residues 100–109 (PEEDEAAEGG) the composition is skewed to acidic residues. Residues 112 to 334 (EEVECPLCLV…LSPSGCTFWG (223 aa)) form a TRIAD supradomain region. Cys116, Cys119, Cys139, Cys142, Cys203, Cys208, Cys225, Cys230, Cys235, Cys238, His243, Cys248, Cys284, and Cys287 together coordinate Zn(2+). The RING-type 1 zinc finger occupies 116-165 (CPLCLVRLPPERAPRLLSCPHRSCRDCLRHYLRLEISESRVPISCPECSE). The IBR-type zinc finger occupies 183-248 (HKYEEFMLRR…KQIWHPNQTC (66 aa)). The RING-type 2; atypical zinc-finger motif lies at 284 to 315 (CPRCSAYIIKMNDGSCNHMTCAVCGCEFCWLC). Cys299 is an active-site residue. Zn(2+) is bound by residues Cys304, Cys307, Cys312, Cys315, His323, and Cys330. The next 2 helical transmembrane spans lie at 351–371 (LIGA…AMVI) and 412–432 (VIAA…VYGV). Disordered stretches follow at residues 598 to 644 (QLVS…QSCE) and 660 to 732 (QPES…YEVE). The segment covering 674-683 (QSDDVPDITS) has biased composition (acidic residues).

This sequence belongs to the RBR family. RNF19 subfamily. Interacts with UBE2L3, UBE2L6 and UCKL1. As to expression, expressed specifically in natural killer cells, activated macrophages and cytotoxic T-cells. Present in macrophages (at protein level). Ubiquitously expressed with high expression in testis.

It is found in the cytoplasmic granule membrane. It localises to the endoplasmic reticulum membrane. It catalyses the reaction [E2 ubiquitin-conjugating enzyme]-S-ubiquitinyl-L-cysteine + [acceptor protein]-L-lysine = [E2 ubiquitin-conjugating enzyme]-L-cysteine + [acceptor protein]-N(6)-ubiquitinyl-L-lysine.. It participates in protein modification; protein ubiquitination. E3 ubiquitin-protein ligase which accepts ubiquitin from E2 ubiquitin-conjugating enzymes UBE2L3 and UBE2L6 in the form of a thioester and then directly transfers the ubiquitin to targeted substrates, such as UCKL1. Involved in the cytolytic activity of natural killer cells and cytotoxic T-cells. Protects against staurosporin-induced cell death. In Mus musculus (Mouse), this protein is E3 ubiquitin-protein ligase RNF19B (Rnf19b).